We begin with the raw amino-acid sequence, 95 residues long: Glutamyl-tRNA(Gln) amidotransferase subunit C (95 aa).

It belongs to the GatC family. As to quaternary structure, heterotrimer of A, B and C subunits.

It carries out the reaction L-glutamyl-tRNA(Gln) + L-glutamine + ATP + H2O = L-glutaminyl-tRNA(Gln) + L-glutamate + ADP + phosphate + H(+). It catalyses the reaction L-aspartyl-tRNA(Asn) + L-glutamine + ATP + H2O = L-asparaginyl-tRNA(Asn) + L-glutamate + ADP + phosphate + 2 H(+). Functionally, allows the formation of correctly charged Asn-tRNA(Asn) or Gln-tRNA(Gln) through the transamidation of misacylated Asp-tRNA(Asn) or Glu-tRNA(Gln) in organisms which lack either or both of asparaginyl-tRNA or glutaminyl-tRNA synthetases. The reaction takes place in the presence of glutamine and ATP through an activated phospho-Asp-tRNA(Asn) or phospho-Glu-tRNA(Gln). The protein is Glutamyl-tRNA(Gln) amidotransferase subunit C of Caulobacter vibrioides (strain ATCC 19089 / CIP 103742 / CB 15) (Caulobacter crescentus).